The sequence spans 429 residues: Ribosomal RNA small subunit methyltransferase B (429 aa).

S-adenosyl-L-methionine-binding positions include 254–260, aspartate 277, aspartate 303, and aspartate 322; that span reads CAAPGGK. Residue cysteine 375 is the Nucleophile of the active site. The interval 397–419 is disordered; that stretch reads ALSETGTPDQPGQQNLPGGEEGD. The segment covering 400–412 has biased composition (polar residues); sequence ETGTPDQPGQQNL.

Belongs to the class I-like SAM-binding methyltransferase superfamily. RsmB/NOP family.

The protein resides in the cytoplasm. It catalyses the reaction cytidine(967) in 16S rRNA + S-adenosyl-L-methionine = 5-methylcytidine(967) in 16S rRNA + S-adenosyl-L-homocysteine + H(+). Functionally, specifically methylates the cytosine at position 967 (m5C967) of 16S rRNA. The chain is Ribosomal RNA small subunit methyltransferase B from Salmonella typhi.